We begin with the raw amino-acid sequence, 104 residues long: Phosphoribosyl-ATP pyrophosphatase (104 aa).

Belongs to the PRA-PH family.

It is found in the cytoplasm. It catalyses the reaction 1-(5-phospho-beta-D-ribosyl)-ATP + H2O = 1-(5-phospho-beta-D-ribosyl)-5'-AMP + diphosphate + H(+). It participates in amino-acid biosynthesis; L-histidine biosynthesis; L-histidine from 5-phospho-alpha-D-ribose 1-diphosphate: step 2/9. The chain is Phosphoribosyl-ATP pyrophosphatase from Methanosarcina barkeri (strain Fusaro / DSM 804).